The following is a 429-amino-acid chain: MKKQRNLRSMAAQAVEQVVEQGQSLSNILPPLQQKVSDKDKALLQELCFGVLRTLSQLDWLINKLMARPMTGKQRTVHYLIMVGLYQLLYTRIPPHAALAETVEGAIAIKRPQLKGLINGVLRQFQRQQEELLAKFNASDARYLHPSWLLKRLQKAYPEQWQSIVEANNQRPPMWLRVNRTHHSRDSWLALLDEAGMKGFPHADYPDAVRLETPAPVHALPGFEDGWVTVQDASAQGCMTWLAPQNGEHILDLCAAPGGKTTHILEVAPEAQVVAVDIDEQRLSRVYDNLKRLGMKATVKQGDGRYPSQWCGEQQFDRILLDAPCSATGVIRRHPDIKWLRRDRDIPELAQLQSEILDAIWPHLKSGGTLVYATCSVLPEENSLQIKAFLQRTADAELCETGTPEQPGKQNLPGAEEGDGFFYAKLIKK.

S-adenosyl-L-methionine contacts are provided by residues 254–260 (CAAPGGK), D277, D303, and D322. The active-site Nucleophile is the C375.

This sequence belongs to the class I-like SAM-binding methyltransferase superfamily. RsmB/NOP family.

The protein resides in the cytoplasm. It catalyses the reaction cytidine(967) in 16S rRNA + S-adenosyl-L-methionine = 5-methylcytidine(967) in 16S rRNA + S-adenosyl-L-homocysteine + H(+). In terms of biological role, specifically methylates the cytosine at position 967 (m5C967) of 16S rRNA. This is Ribosomal RNA small subunit methyltransferase B from Shigella boydii serotype 4 (strain Sb227).